A 212-amino-acid chain; its full sequence is Orotate phosphoribosyltransferase (212 aa).

5-phospho-alpha-D-ribose 1-diphosphate is bound by residues arginine 97, lysine 101, histidine 103, and glutamate 123–serine 131. Residue serine 127 coordinates orotate.

Belongs to the purine/pyrimidine phosphoribosyltransferase family. PyrE subfamily. In terms of assembly, homodimer. Requires Mg(2+) as cofactor.

The enzyme catalyses orotidine 5'-phosphate + diphosphate = orotate + 5-phospho-alpha-D-ribose 1-diphosphate. Its pathway is pyrimidine metabolism; UMP biosynthesis via de novo pathway; UMP from orotate: step 1/2. Functionally, catalyzes the transfer of a ribosyl phosphate group from 5-phosphoribose 1-diphosphate to orotate, leading to the formation of orotidine monophosphate (OMP). The chain is Orotate phosphoribosyltransferase from Bacteroides thetaiotaomicron (strain ATCC 29148 / DSM 2079 / JCM 5827 / CCUG 10774 / NCTC 10582 / VPI-5482 / E50).